Here is a 309-residue protein sequence, read N- to C-terminus: Porphobilinogen deaminase (309 aa).

Position 240 is an S-(dipyrrolylmethanemethyl)cysteine (Cys240).

The protein belongs to the HMBS family. In terms of assembly, monomer. Requires dipyrromethane as cofactor.

The catalysed reaction is 4 porphobilinogen + H2O = hydroxymethylbilane + 4 NH4(+). It functions in the pathway porphyrin-containing compound metabolism; protoporphyrin-IX biosynthesis; coproporphyrinogen-III from 5-aminolevulinate: step 2/4. Tetrapolymerization of the monopyrrole PBG into the hydroxymethylbilane pre-uroporphyrinogen in several discrete steps. In Chromobacterium violaceum (strain ATCC 12472 / DSM 30191 / JCM 1249 / CCUG 213 / NBRC 12614 / NCIMB 9131 / NCTC 9757 / MK), this protein is Porphobilinogen deaminase.